Reading from the N-terminus, the 362-residue chain is Serpentine receptor class epsilon-37 (362 aa).

A run of 7 helical transmembrane segments spans residues 29 to 49 (IFYVFAIFQTSIYILTGYILV), 67 to 87 (IMMCWFLCQWFQAFLAKIVLI), 127 to 147 (IYFASYFLWHYMYSILFAVLA), 170 to 190 (IPILLIAATNLITLPYAYQTT), 204 to 224 (IFIGSVAVFGYIMLWRVNLAW), 260 to 280 (LVVSASVFILVVTILLAVLLF), and 288 to 308 (FFVHALDNSMLLPALVMSLTL).

Belongs to the nematode receptor-like protein sre family.

The protein resides in the membrane. This is Serpentine receptor class epsilon-37 (sre-37) from Caenorhabditis elegans.